Consider the following 417-residue polypeptide: BSD domain-containing protein 1-B (417 aa).

One can recognise a BSD domain in the interval 153–205 (WLAYWDPEQRKAEISEPLVTSPSIRALFTKMVPAAVSHSEFWQRYFYKVHQLE). Disordered regions lie at residues 215–234 (KQRA…EEEE), 262–292 (HVED…SISP), and 323–390 (AAET…DFDM). The segment covering 262 to 278 (HVEDKSEKTAELNRDHT) has biased composition (basic and acidic residues). Residues 281-292 (TSPSESSESISP) show a composition bias toward low complexity. Residues 332–343 (PVEQTGKSNAQM) show a composition bias toward polar residues. Residues 345-356 (THREDPPSDLRV) show a composition bias toward basic and acidic residues. The span at 360-379 (NSDSGKSTPSNNGQKGSSTD) shows a compositional bias: polar residues. A compositionally biased stretch (acidic residues) spans 380–390 (VSEDWEKDFDM).

The sequence is that of BSD domain-containing protein 1-B (bsdc1-b) from Xenopus laevis (African clawed frog).